The following is a 50-amino-acid chain: Sperm protamine P1 (50 aa).

The protein belongs to the protamine P1 family. In terms of tissue distribution, testis.

Its subcellular location is the nucleus. The protein localises to the chromosome. In terms of biological role, protamines substitute for histones in the chromatin of sperm during the haploid phase of spermatogenesis. They compact sperm DNA into a highly condensed, stable and inactive complex. The chain is Sperm protamine P1 (PRM1) from Trachypithecus phayrei (Phayre's leaf monkey).